A 393-amino-acid chain; its full sequence is Golgi membrane protein 1 (393 aa).

Methionine 1 carries the post-translational modification N-acetylmethionine. Residues 1 to 12 (MMGLGNGRRSMK) lie on the Cytoplasmic side of the membrane. Residues 13-35 (SPPLILAALVACVIVLGFNYWIA) traverse the membrane as a helical; Signal-anchor for type II membrane protein segment. The Lumenal portion of the chain corresponds to 36 to 393 (SSRSVELQTR…QVGIHIPQQA (358 aa)). A coiled-coil region spans residues 40–183 (VELQTRIVEL…IEEVIRKRNE (144 aa)). N-linked (GlcNAc...) asparagine glycans are attached at residues asparagine 109 and asparagine 144. 2 disordered regions span residues 180–247 (KRNE…QVQN) and 284–352 (HTQL…LAGN). Phosphoserine is present on serine 187. 2 stretches are compositionally biased toward polar residues: residues 192–201 (ETNNQHQQAL) and 227–247 (NKSQ…QVQN). A glycan (N-linked (GlcNAc...) asparagine) is linked at asparagine 227. Positions 294-320 (RPEEDSQYPEREQLVIRDRQEQQRASE) are enriched in basic and acidic residues. A compositionally biased stretch (acidic residues) spans 330–339 (DEYDMDENEA).

This sequence belongs to the GOLM family. Interacts with DYM. Post-translationally, glycosylated. In terms of processing, phosphorylation sites are present in the extracellular medium.

It localises to the golgi apparatus. The protein localises to the cis-Golgi network membrane. Its function is as follows. Unknown. Cellular response protein to viral infection. This is Golgi membrane protein 1 (Golm1) from Mus musculus (Mouse).